A 344-amino-acid chain; its full sequence is MLRVESVSKDYKEFKLRDISFDVKKEEHFIILGPSGAGKTVLLEIIAGIIEPDEGRIILNGVDVTSYPPEKRNLAYIPQDYALFPHMTVYDNIAFGLKLRRISRQEIDRKVKEISKVLGIEHLLHRKPRTLSGGEKQRVAIARALVIEPELLLLDEPFANLDVQTKSRFMTEMKVWRKELGFTSLHVTHSFEEAISLGDRVGVMLRGRLVQVGDVKEVFSNPVDEGVARFLGFENIIEGVAKGNILEANGVKITLPISVEGKVRIGVRPEDIILSTEPVKTSARNEFRAEVIGIEELGPLVRVNLKIGGITLKAFITRSSLIELGISEGREVYVSFKTSAIKVF.

Residues 2-231 (LRVESVSKDY…PVDEGVARFL (230 aa)) form the ABC transporter domain. 33-40 (GPSGAGKT) provides a ligand contact to ATP. Residues 280–344 (KTSARNEFRA…SFKTSAIKVF (65 aa)) form the Mop domain.

Belongs to the ABC transporter superfamily. Sulfate/tungstate importer (TC 3.A.1.6) family. As to quaternary structure, the complex is composed of two ATP-binding proteins (WtpC), two transmembrane proteins (WtpB) and a solute-binding protein (WtpA).

It is found in the cell membrane. It catalyses the reaction tungstate(in) + ATP + H2O = tungstate(out) + ADP + phosphate + H(+). In terms of biological role, part of the ABC transporter complex WtpABC involved in molybdate/tungstate import. Responsible for energy coupling to the transport system. The chain is Molybdate/tungstate import ATP-binding protein WtpC (wtpC) from Pyrococcus abyssi (strain GE5 / Orsay).